Here is a 118-residue protein sequence, read N- to C-terminus: Large ribosomal subunit protein bL20 (118 aa).

The protein belongs to the bacterial ribosomal protein bL20 family.

Functionally, binds directly to 23S ribosomal RNA and is necessary for the in vitro assembly process of the 50S ribosomal subunit. It is not involved in the protein synthesizing functions of that subunit. The protein is Large ribosomal subunit protein bL20 of Lactobacillus delbrueckii subsp. bulgaricus (strain ATCC BAA-365 / Lb-18).